The sequence spans 634 residues: GTP-binding protein 4 (634 aa).

Residue alanine 2 is modified to N-acetylalanine. The residue at position 103 (lysine 103) is an N6-acetyllysine; alternate. A Glycyl lysine isopeptide (Lys-Gly) (interchain with G-Cter in SUMO2); alternate cross-link involves residue lysine 103. Serine 122 carries the phosphoserine modification. The region spanning 169-340 (RTLLLCGYPN…VKTEACDRLL (172 aa)) is the OBG-type G domain. Residues 175-182 (GYPNVGKS), 221-225 (DTPGI), and 289-292 (NKCD) each bind GTP. Residue lysine 332 forms a Glycyl lysine isopeptide (Lys-Gly) (interchain with G-Cter in SUMO2) linkage. A phosphoserine mark is found at serine 468, serine 470, and serine 472. The disordered stretch occupies residues 494–634 (KILQSKEKNK…KRKAGKKDRR (141 aa)). A Glycyl lysine isopeptide (Lys-Gly) (interchain with G-Cter in SUMO2) cross-link involves residue lysine 534. Basic residues predominate over residues 544-554 (RRSRSVTRKRK). Serine 558 is subject to Phosphoserine. The segment covering 560-572 (PPSSTARSRSCSR) has biased composition (low complexity). Residues 573 to 585 (TPRDVSGLRDVKM) are compositionally biased toward basic and acidic residues. The span at 586–604 (VKKAKTMMKKAQKKMNRLG) shows a compositional bias: basic residues. The span at 605–618 (KKGEADRHVFDMKP) shows a compositional bias: basic and acidic residues. Over residues 619 to 634 (KHLLSGKRKAGKKDRR) the composition is skewed to basic residues.

It belongs to the TRAFAC class OBG-HflX-like GTPase superfamily. OBG GTPase family. NOG subfamily. Associates with pre-60S ribosomal particles. Interacts with MINAS-60 (product of an alternative open reading frame of RBM10). Ubiquitous.

The protein localises to the nucleus. Its subcellular location is the nucleolus. Functionally, involved in the biogenesis of the 60S ribosomal subunit. Acts as TP53 repressor, preventing TP53 stabilization and cell cycle arrest. In Mus musculus (Mouse), this protein is GTP-binding protein 4 (Gtpbp4).